The sequence spans 43 residues: Cytochrome b559 subunit beta (43 aa).

Residues 18–34 (WLAVHTLAIPTVFFLGA) traverse the membrane as a helical segment. H22 is a heme binding site.

Belongs to the PsbE/PsbF family. In terms of assembly, heterodimer of an alpha subunit and a beta subunit. PSII is composed of 1 copy each of membrane proteins PsbA, PsbB, PsbC, PsbD, PsbE, PsbF, PsbH, PsbI, PsbJ, PsbK, PsbL, PsbM, PsbT, PsbX, PsbY, PsbZ, Psb30/Ycf12, peripheral proteins PsbO, CyanoQ (PsbQ), PsbU, PsbV and a large number of cofactors. It forms dimeric complexes. Heme b serves as cofactor.

The protein localises to the cellular thylakoid membrane. This b-type cytochrome is tightly associated with the reaction center of photosystem II (PSII). PSII is a light-driven water:plastoquinone oxidoreductase that uses light energy to abstract electrons from H(2)O, generating O(2) and a proton gradient subsequently used for ATP formation. It consists of a core antenna complex that captures photons, and an electron transfer chain that converts photonic excitation into a charge separation. The sequence is that of Cytochrome b559 subunit beta from Synechococcus sp. (strain JA-2-3B'a(2-13)) (Cyanobacteria bacterium Yellowstone B-Prime).